Consider the following 300-residue polypeptide: Dihydroorotate dehydrogenase B (NAD(+)), catalytic subunit (300 aa).

FMN contacts are provided by residues serine 21 and 45 to 46; that span reads KS. Substrate-binding positions include lysine 45, 69–73, and asparagine 125; that span reads NAVGL. Asparagine 125 lines the FMN pocket. Catalysis depends on cysteine 128, which acts as the Nucleophile. Lysine 163 and isoleucine 187 together coordinate FMN. A substrate-binding site is contributed by 188–189; sequence NT. Residues glycine 213, 239 to 240, and 261 to 262 contribute to the FMN site; these read GG and GT.

Belongs to the dihydroorotate dehydrogenase family. Type 1 subfamily. As to quaternary structure, heterotetramer of 2 PyrK and 2 PyrD type B subunits. FMN is required as a cofactor.

It localises to the cytoplasm. The enzyme catalyses (S)-dihydroorotate + NAD(+) = orotate + NADH + H(+). It functions in the pathway pyrimidine metabolism; UMP biosynthesis via de novo pathway; orotate from (S)-dihydroorotate (NAD(+) route): step 1/1. Functionally, catalyzes the conversion of dihydroorotate to orotate with NAD(+) as electron acceptor. In Thermoplasma acidophilum (strain ATCC 25905 / DSM 1728 / JCM 9062 / NBRC 15155 / AMRC-C165), this protein is Dihydroorotate dehydrogenase B (NAD(+)), catalytic subunit (pyrD).